A 431-amino-acid polypeptide reads, in one-letter code: Nuclear bridge Ish domain protein les1 (431 aa).

The N-terminal stretch at 1–21 is a signal peptide; the sequence is MQPRFLLHGALLALGIQLCLS.

The protein resides in the nucleus inner membrane. Inner nuclear envelope protein involved in nuclear fission, which is achieved via local disassembly of nuclear pores within the narrow bridge that links segregating daughter nuclei. Les1 restricts the process of local nuclear envelope breakdown to the bridge midzone to prevent the leakage of material from daughter nuclei during mitosis. This chain is Nuclear bridge Ish domain protein les1, found in Schizosaccharomyces pombe (strain 972 / ATCC 24843) (Fission yeast).